The following is a 1679-amino-acid chain: Lysophospholipase NTE1 (1679 aa).

A compositionally biased stretch (low complexity) spans 1-20 (MRSMNCTTNNTNNTGQNTKN). The tract at residues 1 to 21 (MRSMNCTTNNTNNTGQNTKNS) is disordered. At 1-49 (MRSMNCTTNNTNNTGQNTKNSLGSSFNSSNYTSYRFQTCLTDQIISEAQ) the chain is on the cytoplasmic side. Residues 50 to 70 (TWSLSSLFNFSWVVSYFVMGA) traverse the membrane as a helical segment. The Lumenal portion of the chain corresponds to 71-103 (SRMIFRYGWYLATLSLLRIPKWIFFKLHHVQFT). A helical membrane pass occupies residues 104-124 (LSFWLILFALAVIVFVTYTIM). The Cytoplasmic portion of the chain corresponds to 125–1679 (KERILSQYKR…EFLLHRRNSI (1555 aa)). The span at 261–274 (SDKDHGDETDHSDT) shows a compositional bias: basic and acidic residues. The tract at residues 261–304 (SDKDHGDETDHSDTDGLDDQDRDEEDEEEDDDIDNYDTKSCSSN) is disordered. The segment covering 275-295 (DGLDDQDRDEEDEEEDDDIDN) has biased composition (acidic residues). 2 positions are modified to phosphoserine: Ser300 and Ser312. 2 disordered regions span residues 498–527 (SSGS…KPSD) and 586–672 (DILS…VSPR). Polar residues-rich tracts occupy residues 592 to 606 (PIHN…GINT) and 630 to 652 (FSSL…LDNT). Phosphoserine occurs at positions 632, 634, 653, 661, 670, 680, and 739. Residues 775–800 (KEYTISNKRHNKSKSQDKKKPRAYKE) form a disordered region. Basic and acidic residues predominate over residues 788-800 (KSQDKKKPRAYKE). Thr803 carries the post-translational modification Phosphothreonine. A nucleoside 3',5'-cyclic phosphate contacts are provided by residues 803–947 (TPNL…LTKL) and 943–1074 (SLTK…VAKK). The segment at 855 to 882 (SSSVVSSMSKPEQVSAQSSHKGENPHHT) is disordered. Over residues 862-873 (MSKPEQVSAQSS) the composition is skewed to polar residues. Positions 1373 to 1537 (LVLGGGGARG…VDNLPVTEMR (165 aa)) constitute a PNPLA domain. Positions 1377-1382 (GGGARG) match the GXGXXG motif. Residues 1404–1408 (GTSIG) carry the GXSXG motif. Catalysis depends on Ser1406, which acts as the Nucleophile. Asp1524 serves as the catalytic Proton acceptor. Residues 1524-1526 (DGG) carry the DGA/G motif.

This sequence belongs to the NTE family.

Its subcellular location is the endoplasmic reticulum membrane. The protein resides in the lipid droplet. It catalyses the reaction a 1-acyl-sn-glycero-3-phosphocholine + H2O = sn-glycerol 3-phosphocholine + a fatty acid + H(+). It carries out the reaction a 1,2-diacyl-sn-glycero-3-phosphocholine + 2 H2O = sn-glycerol 3-phosphocholine + 2 a carboxylate + 2 H(+). Its activity is regulated as follows. Positively regulated by SEC14. Inhibited by organophosphorus esters in the order phenyl saligenin phosphate (PSP) &gt; phenyldipentyl phosphinate (PDPP) = diisopropyl fluorophosphate (DFP) &gt; and paraoxon (PXN). Intracellular phospholipase B that catalyzes the double deacylation of phosphatidylcholine (PC) to glycerophosphocholine (GroPCho). Plays an important role in membrane lipid homeostasis. Responsible for the rapid PC turnover in response to inositol, elevated temperatures, or when choline is present in the growth medium. NTE1 activity impacts the repressing transcriptional activity of OPI1, the main regulator of phospholipid synthesis gene transcription. The polypeptide is Lysophospholipase NTE1 (NTE1) (Saccharomyces cerevisiae (strain ATCC 204508 / S288c) (Baker's yeast)).